The following is a 100-amino-acid chain: Ubiquitin-related modifier 1 homolog (100 aa).

Gly100 bears the 1-thioglycine mark. A Glycyl lysine isopeptide (Gly-Lys) (interchain with K-? in acceptor proteins) cross-link involves residue Gly100.

The protein belongs to the URM1 family. C-terminal thiocarboxylation occurs in 2 steps, it is first acyl-adenylated (-COAMP) via the hesA/moeB/thiF part of the MOCS3 homolog, then thiocarboxylated (-COSH) via the rhodanese domain of the MOCS3 homolog.

It is found in the cytoplasm. The protein operates within tRNA modification; 5-methoxycarbonylmethyl-2-thiouridine-tRNA biosynthesis. Its function is as follows. Acts as a sulfur carrier required for 2-thiolation of mcm(5)S(2)U at tRNA wobble positions of cytosolic tRNA(Lys), tRNA(Glu) and tRNA(Gln). Serves as sulfur donor in tRNA 2-thiolation reaction by being thiocarboxylated (-COSH) at its C-terminus by MOCS3. The sulfur is then transferred to tRNA to form 2-thiolation of mcm(5)S(2)U. Also acts as a ubiquitin-like protein (UBL) that is covalently conjugated via an isopeptide bond to lysine residues of target proteins. The thiocarboxylated form serves as substrate for conjugation and oxidative stress specifically induces the formation of UBL-protein conjugates. This Caenorhabditis elegans protein is Ubiquitin-related modifier 1 homolog.